We begin with the raw amino-acid sequence, 143 residues long: Large ribosomal subunit protein uL11 (143 aa).

It belongs to the universal ribosomal protein uL11 family. As to quaternary structure, part of the ribosomal stalk of the 50S ribosomal subunit. Interacts with L10 and the large rRNA to form the base of the stalk. L10 forms an elongated spine to which L12 dimers bind in a sequential fashion forming a multimeric L10(L12)X complex. One or more lysine residues are methylated.

In terms of biological role, forms part of the ribosomal stalk which helps the ribosome interact with GTP-bound translation factors. This Kineococcus radiotolerans (strain ATCC BAA-149 / DSM 14245 / SRS30216) protein is Large ribosomal subunit protein uL11.